The chain runs to 299 residues: Acetaldehyde dehydrogenase 6 (299 aa).

The active-site Acyl-thioester intermediate is the C125. Residues 156-164 (GAGPGTRAN) and N275 each bind NAD(+).

It belongs to the acetaldehyde dehydrogenase family.

The enzyme catalyses acetaldehyde + NAD(+) + CoA = acetyl-CoA + NADH + H(+). This chain is Acetaldehyde dehydrogenase 6 (hpdG), found in Rhodococcus jostii (strain RHA1).